The following is a 378-amino-acid chain: Erythronate-4-phosphate dehydrogenase (378 aa).

The substrate site is built by Ser-45 and Thr-66. The NAD(+) site is built by Asp-146 and Thr-175. The active site involves Arg-208. Position 232 (Asp-232) interacts with NAD(+). Glu-237 is an active-site residue. The Proton donor role is filled by His-254. Residue Gly-257 participates in NAD(+) binding. Tyr-258 contributes to the substrate binding site.

Belongs to the D-isomer specific 2-hydroxyacid dehydrogenase family. PdxB subfamily. In terms of assembly, homodimer.

Its subcellular location is the cytoplasm. The enzyme catalyses 4-phospho-D-erythronate + NAD(+) = (R)-3-hydroxy-2-oxo-4-phosphooxybutanoate + NADH + H(+). It participates in cofactor biosynthesis; pyridoxine 5'-phosphate biosynthesis; pyridoxine 5'-phosphate from D-erythrose 4-phosphate: step 2/5. In terms of biological role, catalyzes the oxidation of erythronate-4-phosphate to 3-hydroxy-2-oxo-4-phosphonooxybutanoate. The polypeptide is Erythronate-4-phosphate dehydrogenase (Escherichia coli O127:H6 (strain E2348/69 / EPEC)).